The following is a 637-amino-acid chain: 3D-(3,5/4)-trihydroxycyclohexane-1,2-dione hydrolase (637 aa).

Thiamine diphosphate is bound at residue Glu66. The tract at residues 442-522 is thiamine pyrophosphate binding; that stretch reads SLPGDLQRLW…INVLLFDNSG (81 aa). Residues Asp493 and Asn520 each coordinate Mg(2+).

It belongs to the TPP enzyme family. Mg(2+) is required as a cofactor. Thiamine diphosphate serves as cofactor.

It catalyses the reaction 3D-3,5/4-trihydroxycyclohexane-1,2-dione + H2O = 5-deoxy-D-glucuronate + H(+). It participates in polyol metabolism; myo-inositol degradation into acetyl-CoA; acetyl-CoA from myo-inositol: step 3/7. Functionally, involved in the cleavage of the C1-C2 bond of 3D-(3,5/4)-trihydroxycyclohexane-1,2-dione (THcHDO) to yield 5-deoxy-glucuronate (5DG). This is 3D-(3,5/4)-trihydroxycyclohexane-1,2-dione hydrolase from Bacillus licheniformis (strain ATCC 14580 / DSM 13 / JCM 2505 / CCUG 7422 / NBRC 12200 / NCIMB 9375 / NCTC 10341 / NRRL NRS-1264 / Gibson 46).